A 186-amino-acid chain; its full sequence is ADP-ribosylation factor-like protein 6 (186 aa).

Glycine 2 is lipidated: N-myristoyl glycine. Residues 24-31 (GLDNSGKT), threonine 50, 69-73 (DMSGQ), glycine 72, 130-133 (NKMD), and alanine 164 each bind GTP. Threonine 50 contributes to the Mg(2+) binding site.

The protein belongs to the small GTPase superfamily. Arf family. As to quaternary structure, interacts with SEC61B, ARL6IP1, ARL6IP2, ARL6IP3, ARL6IP4 ARL6IP5 and ARL6IP6. Interacts (GTP-bound form) with the BBSome a complex that contains BBS1, BBS2, BBS4, BBS5, BBS7, BBS8/TTC8, BBS9 and BBIP10. Interacts (GTP-free form) with IFT27.

Its subcellular location is the cell projection. The protein localises to the cilium membrane. The protein resides in the cytoplasm. It is found in the cytoskeleton. It localises to the cilium axoneme. Its subcellular location is the cilium basal body. Involved in membrane protein trafficking at the base of the ciliary organelle. Mediates recruitment onto plasma membrane of the BBSome complex which would constitute a coat complex required for sorting of specific membrane proteins to the primary cilia. Together with the BBSome complex and LTZL1, controls SMO ciliary trafficking and contributes to the sonic hedgehog (SHH) pathway regulation. May regulate cilia assembly and disassembly and subsequent ciliary signaling events such as the Wnt signaling cascade. Isoform 2 may be required for proper retinal function and organization. This is ADP-ribosylation factor-like protein 6 (ARL6) from Pongo abelii (Sumatran orangutan).